The sequence spans 180 residues: Adenine phosphoribosyltransferase (180 aa).

This sequence belongs to the purine/pyrimidine phosphoribosyltransferase family. In terms of assembly, homodimer.

The protein localises to the cytoplasm. The catalysed reaction is AMP + diphosphate = 5-phospho-alpha-D-ribose 1-diphosphate + adenine. It participates in purine metabolism; AMP biosynthesis via salvage pathway; AMP from adenine: step 1/1. Its function is as follows. Catalyzes a salvage reaction resulting in the formation of AMP, that is energically less costly than de novo synthesis. In Mannheimia succiniciproducens (strain KCTC 0769BP / MBEL55E), this protein is Adenine phosphoribosyltransferase.